Here is a 335-residue protein sequence, read N- to C-terminus: Nucleoid-associated protein PSEEN4449 (335 aa).

It belongs to the YejK family.

The protein resides in the cytoplasm. It is found in the nucleoid. This is Nucleoid-associated protein PSEEN4449 from Pseudomonas entomophila (strain L48).